We begin with the raw amino-acid sequence, 156 residues long: Arginine repressor (156 aa).

This sequence belongs to the ArgR family.

It localises to the cytoplasm. Its pathway is amino-acid biosynthesis; L-arginine biosynthesis [regulation]. Functionally, regulates arginine biosynthesis genes. This is Arginine repressor from Pectobacterium atrosepticum (strain SCRI 1043 / ATCC BAA-672) (Erwinia carotovora subsp. atroseptica).